Reading from the N-terminus, the 245-residue chain is 1-(5-phosphoribosyl)-5-[(5-phosphoribosylamino)methylideneamino] imidazole-4-carboxamide isomerase (245 aa).

Asp-8 functions as the Proton acceptor in the catalytic mechanism. Asp-129 serves as the catalytic Proton donor.

This sequence belongs to the HisA/HisF family.

The protein localises to the cytoplasm. The catalysed reaction is 1-(5-phospho-beta-D-ribosyl)-5-[(5-phospho-beta-D-ribosylamino)methylideneamino]imidazole-4-carboxamide = 5-[(5-phospho-1-deoxy-D-ribulos-1-ylimino)methylamino]-1-(5-phospho-beta-D-ribosyl)imidazole-4-carboxamide. Its pathway is amino-acid biosynthesis; L-histidine biosynthesis; L-histidine from 5-phospho-alpha-D-ribose 1-diphosphate: step 4/9. The polypeptide is 1-(5-phosphoribosyl)-5-[(5-phosphoribosylamino)methylideneamino] imidazole-4-carboxamide isomerase (Heliobacterium modesticaldum (strain ATCC 51547 / Ice1)).